We begin with the raw amino-acid sequence, 1438 residues long: MDLPPDSRTALRDWLTEQLADLLGEPLADVRALADDDDLLGCGLDSIRLMYLQERLRARGSTLDFAQLAQRPCLGAWLDLLACADRLSAPATVALPTAQDRDQPFELSSVQQAYWLGRGAGEVLGNVSCHAFLEFRTRDVDPQRLAAAAECVRQRHPMLRARFLDGRQQILPTPPLSCFDLQDWRTLQVDEAERDWQALRDWRAHECLAVERGQVFLLGLVRMPGGEDRLWLSLDLLAADVESLRLLLAELGVAYLAPERLAEPPALHFADYLAHRAAQRAEAAARARDYWLERLPRLPDAPALPLACAPESIRQPRTRRLAFQLSAGESRRLERLAAQHGVTLSSVFGCAFALVLARWSESAEFLLNVPLFDRHADDPRIGEVIADFTTLLLLECRMQAGVSFAEAVKSFQRNLHGAIDHAAFPALEVLREARRQGQPRSAPVVFASNLGEEGFVPAAFRDAFGDLHDMLSQTPQVWLDHQLYRVGDGILLAWDSVVGLFPEGLPETMFEAYVGLLQRLCDSAWGQPADLPLPWAQQARRALLNGQPACATARTLHRDFFLRAAEAPDADALLYRDQRVTRGELAERALRIAGGLREAGVRPGDAVEVSLPRGPQQVAAVFGVLAAGACYVPLDIDQPPARRRLIEEAAGVCLAITEEDDPQALPPRLDVQRLLRGPALAAPVPLAPQASAYVIYTSGSTGVPKGVEVSHAAAINTIDALLDLLRVNASDRLLAVSALDFDLSVFDLFGGLGAGASLVLPAQEQARDAAAWAEAIQRHAVSLWNSAPALLEMALSLPASQADYRSLRAVLLSGDWVALDLPGRLRPRCAEGCRLHVLGGATEAGIWSNLQSVDTVPPHWRSIPYGRPLPGQAYRVVDTHGRDVPDLVVGELWIGGASLARGYRNDPELSARRFVHDAQGRWYRTGDRGRYWGDGTLEFLGRVDQQVKVRGQRIELGEVEAALCAQAGVESACAAVLGGGVASLGAVLVPRLAPRAEGSMDLPAAQPFAGLAEAEAVLTREILGALLEAPLELDDGLRRRWLDWLADSAASALPSLDEALRRLGWQAAGLTAMGNALRGLLAGEQAPAALLLDPWLAPQAVAARLPDGREALARLLEALPTPAAGERLRVAVLDTRAGLWLDQGMASLLRPGLELTLFERSRVLLDAAATRLPERIVVQALDDGLLPAEHLGRYDRVISFAALHAYEASREGLALAAALLRPQGRLLLVDLLCESPLALLGAALLDDRPLRLAELPSLLADLAAAGLAPRCLWRSERIALVEALAPGLGLDAAALQAGLEQRLPQAMRPERLWCLPSLPLNGNGKVDRRRLAESMTRALGECRHEPSAEEPLEAHEQALAECWEAVLKRPVRRREASFFSLGGDSLLATRLLAGIRERFGVRLGMADFYRQPTLAGLARHLQVQTVEIEETQLEEGVL.

Residues 6–85 enclose the Carrier 1 domain; that stretch reads DSRTALRDWL…AWLDLLACAD (80 aa). Position 46 is an O-(pantetheine 4'-phosphoryl)serine (Ser-46). Positions 136-442 are condensation/cyclization; the sequence is RTRDVDPQRL…ARRQGQPRSA (307 aa). An adenylation region spans residues 563–950; sequence RAAEAPDADA…GRVDQQVKVR (388 aa). Residues 1350–1425 form the Carrier 2 domain; that stretch reads EPLEAHEQAL…GLARHLQVQT (76 aa). At Ser-1385 the chain carries O-(pantetheine 4'-phosphoryl)serine.

The protein belongs to the NRP synthetase family. The cofactor is pantetheine 4'-phosphate.

The catalysed reaction is holo-[peptidyl-carrier protein] + L-cysteine + ATP = L-cysteinyl-[peptidyl-carrier protein] + AMP + diphosphate. Its pathway is siderophore biosynthesis. It functions in the pathway antifungal biosynthesis. In terms of biological role, involved in the biosynthesis of the siderophore pyochelin. Accepts salicylate activated by PchD at the first peptidyl carrier domain (ArCP), and activates and fixes one molecule of cysteine at the second peptidyl carrier domain (PCP1) via a thioester linkage to the phosphopanthetheine moiety. Then catalyzes the condensation reaction between the salicylate bound to the first site and the cysteine bound to the second site, and the cyclization of the cysteine to form the salicyl-thiazolinyl-S-PCP1 intermediate at the second site. When this intermediate is released by the action of a thioesterase, it produces the antifungal antibiotic dihydroaeruginoic acid (Dha or hydroxyphenyl-thiazolinyl-carboxylate). The chain is Pyochelin synthetase PchE from Pseudomonas aeruginosa (strain ATCC 15692 / DSM 22644 / CIP 104116 / JCM 14847 / LMG 12228 / 1C / PRS 101 / PAO1).